Consider the following 362-residue polypeptide: Serine/threonine-protein kinase ZRK4 (362 aa).

Residues methionine 1–arginine 23 form a disordered region. One can recognise a Protein kinase domain in the interval leucine 35 to threonine 362. Residues leucine 41–isoleucine 49 and lysine 89 each bind ATP. The Proton acceptor role is filled by aspartate 185.

It belongs to the protein kinase superfamily. Ser/Thr protein kinase family. ZRK subfamily.

The enzyme catalyses L-seryl-[protein] + ATP = O-phospho-L-seryl-[protein] + ADP + H(+). It carries out the reaction L-threonyl-[protein] + ATP = O-phospho-L-threonyl-[protein] + ADP + H(+). This is Serine/threonine-protein kinase ZRK4 from Arabidopsis thaliana (Mouse-ear cress).